The chain runs to 649 residues: WEB family protein At5g55860 (649 aa).

3 coiled-coil regions span residues 59–227 (EKVL…ACSQ), 267–356 (EFAK…IESV), and 391–461 (TINQ…MSEK). Basic and acidic residues predominate over residues 443–453 (EAKAAETKALE). The disordered stretch occupies residues 443 to 483 (EAKAAETKALEQIKSMSEKTNAARNSTSSESGSQSITLSQE). Over residues 456 to 467 (KSMSEKTNAARN) the composition is skewed to polar residues. The span at 468-482 (STSSESGSQSITLSQ) shows a compositional bias: low complexity. Residues 505–549 (AALAQVEAVRASENETLKKLETTQEEIKKLKTATEEALKKAAMAD) are a coiled coil. The interval 583 to 611 (MKMASESSPQQHYKAPKQKPVNNKLEKTK) is disordered.

It belongs to the WEB family.

This Arabidopsis thaliana (Mouse-ear cress) protein is WEB family protein At5g55860.